An 88-amino-acid chain; its full sequence is Apolipoprotein C-I (88 aa).

An N-terminal signal peptide occupies residues 1-26; that stretch reads MRLFIALPVLIVVVAMTLEGPAPAQA.

The protein belongs to the apolipoprotein C1 family. As to expression, adult and fetal liver.

Its subcellular location is the secreted. Functionally, inhibitor of lipoprotein binding to the low density lipoprotein (LDL) receptor, LDL receptor-related protein, and very low density lipoprotein (VLDL) receptor. Associates with high density lipoproteins (HDL) and the triacylglycerol-rich lipoproteins in the plasma and makes up about 10% of the protein of the VLDL and 2% of that of HDL. Appears to interfere directly with fatty acid uptake and is also the major plasma inhibitor of cholesteryl ester transfer protein (CETP). Modulates the interaction of APOE with beta-migrating VLDL and inhibits binding of beta-VLDL to the LDL receptor-related protein. Binds free fatty acids and reduces their intracellular esterification. This Mus musculus (Mouse) protein is Apolipoprotein C-I (Apoc1).